We begin with the raw amino-acid sequence, 811 residues long: MTEPNRARKTRQRTAFAAPDQRTAPRRGALALRPLVFAVAGVWTAASAAQSQGATQQAASAQAPSSAASVTALAVSGPTTPGGAPLVPKMAEPVKRPDNAVPSFAAADAMDGRTNEDIHLRGHGELRRNGTVVKGDTLDYNQDTDFATATGNVRLFRDGTLVTGPDAALKVTANEGTMHTPSYEFHTVGGRGSAERIDFIDKDNSRITKGTYTTCSPDNVDWYFSASQIDIDSDRQVGSGRAGVLHFLGMPVFASPVFDFPLNDERRSGFLAPVFGYSSRSGADVTLPYYFNIAPNRDLTLYPRLLSQRGLQLGAEYRYLSQTYNGVLRGEFLPNDREADRNRWSIALVHNQRLATGLNAYVNYNKVSDSTYPDDLGRSIVTATQRQYTQEGGVTYSIGDWVALARVQKFQTLSTATTALSPPYERVPQLNLSYNRYDVGGFDINFQTDYTKFSIPTENTVQGERLFMQPTISYPIIRPGWFVTPKFILNTTSYRLDRPTGDTQASQINRTLPTVSLDSGLTFERDTPLVSKWFGRSYIQTLEPRLFYVYTPFRDQSQIPLFDTAQSDYNLGQIFTENPYTGYDRIADNNKLTAGVTTRFIESETGIERLRATLAQRLDFEGQRVTLAGSAPTSVRRYSDLLGATTIQMFRGIFFDTNLQYNQDIDRIMRSTMAFSWKPDANKVINLGYRYYRADANTGQLALEQTDISAQWPLTRRLYGLGRIGYDMDAKKPSDMLLGFEYVADCWVGRLAVQRYSNATSGYTTHIFAQIEFKGLSKVGNNPIDVIRLNVPGYQPVTAQPVTPSVLDQYE.

A signal peptide spans 1–17 (MTEPNRARKTRQRTAFA). The interval 1 to 22 (MTEPNRARKTRQRTAFAAPDQR) is disordered.

Belongs to the LptD family. As to quaternary structure, component of the lipopolysaccharide transport and assembly complex. Interacts with LptE and LptA.

Its subcellular location is the cell outer membrane. Together with LptE, is involved in the assembly of lipopolysaccharide (LPS) at the surface of the outer membrane. In Ralstonia nicotianae (strain ATCC BAA-1114 / GMI1000) (Ralstonia solanacearum), this protein is LPS-assembly protein LptD.